A 426-amino-acid polypeptide reads, in one-letter code: Formyl-CoA:oxalate CoA-transferase (426 aa).

Residues 17–18 (QS), Arg38, 72–75 (LDTK), 96–98 (NFG), Arg104, and 136–139 (KVYE) contribute to the CoA site. Asp168 (nucleophile) is an active-site residue. Residue 247–249 (GGQ) coordinates substrate.

The protein belongs to the CoA-transferase III family. Frc subfamily. As to quaternary structure, homodimer.

It carries out the reaction formyl-CoA + oxalate = oxalyl-CoA + formate. Its pathway is metabolic intermediate degradation; oxalate degradation; CO(2) and formate from oxalate: step 1/2. In terms of biological role, involved in the catabolism of oxalate and in the adapatation to low pH via the induction of the oxalate-dependent acid tolerance response (ATR). Catalyzes the transfer of the CoA moiety from formyl-CoA to oxalate. In Rhodopseudomonas palustris (strain BisB18), this protein is Formyl-CoA:oxalate CoA-transferase.